The chain runs to 436 residues: MTAKQTVTTRDGERIAIVAGLRTPFAKMATNFHGVPAVDLGKMVVNEMLVKHNVDPLLIEQLVYGQVVQMPEAPNIAREIVLGTGMSVHTDAYSVSRACATSFQSTVNIAESMMLGNISVGIAGGADSTSVSPIGVSKNLARALTDLQKTKTLGQKFNVLKKLGLKDLLPVPPAVAEYSTGLSMGQTAEQMAKSHSISRADQDKLAHRSHSLAAQSWNEGKLAGEVMTAYPAPYKSAFEKDNNIRFDSKLEGYAKLRPVFDKKHGTVTAANATPLTDGASAVLMMTESRAKALGYTPLGYIKSYAFAAIDVWEDMLMGPSYATPMALDRAGMTLNDLTLIEMHEAFAAQTLANIKMFASDKFAQEKLGRSKATGEIDMAKFNVMGSSLAYGHPFAATGTRMITQMLNELNRRGGGSGLLTACAAGGLAAAMIVETE.

The Acyl-thioester intermediate role is filled by Cys-99. Active-site proton acceptor residues include His-392 and Cys-422.

Belongs to the thiolase-like superfamily. Thiolase family. In terms of assembly, heterotetramer of two alpha chains (FadJ) and two beta chains (FadI).

It is found in the cytoplasm. It catalyses the reaction an acyl-CoA + acetyl-CoA = a 3-oxoacyl-CoA + CoA. It functions in the pathway lipid metabolism; fatty acid beta-oxidation. Catalyzes the final step of fatty acid oxidation in which acetyl-CoA is released and the CoA ester of a fatty acid two carbons shorter is formed. This Pseudoalteromonas atlantica (strain T6c / ATCC BAA-1087) protein is 3-ketoacyl-CoA thiolase.